The chain runs to 153 residues: 3-hydroxyacyl-[acyl-carrier-protein] dehydratase FabZ (153 aa).

His-54 is a catalytic residue.

It belongs to the thioester dehydratase family. FabZ subfamily.

Its subcellular location is the cytoplasm. The catalysed reaction is a (3R)-hydroxyacyl-[ACP] = a (2E)-enoyl-[ACP] + H2O. Functionally, involved in unsaturated fatty acids biosynthesis. Catalyzes the dehydration of short chain beta-hydroxyacyl-ACPs and long chain saturated and unsaturated beta-hydroxyacyl-ACPs. The sequence is that of 3-hydroxyacyl-[acyl-carrier-protein] dehydratase FabZ from Shewanella frigidimarina (strain NCIMB 400).